The sequence spans 499 residues: 2-isopropylmalate synthase (499 aa).

The region spanning 5–267 is the Pyruvate carboxyltransferase domain; the sequence is IKIFDTTLRD…ETGINLGEIA (263 aa). Mn(2+) is bound by residues Asp14, His202, His204, and Asn238. Residues 391–499 are regulatory domain; that stretch reads SVEVLHVISG…YLSALNRIRR (109 aa).

The protein belongs to the alpha-IPM synthase/homocitrate synthase family. LeuA type 1 subfamily. Mn(2+) is required as a cofactor.

The protein resides in the cytoplasm. The catalysed reaction is 3-methyl-2-oxobutanoate + acetyl-CoA + H2O = (2S)-2-isopropylmalate + CoA + H(+). It functions in the pathway amino-acid biosynthesis; L-leucine biosynthesis; L-leucine from 3-methyl-2-oxobutanoate: step 1/4. Functionally, catalyzes the condensation of the acetyl group of acetyl-CoA with 3-methyl-2-oxobutanoate (2-ketoisovalerate) to form 3-carboxy-3-hydroxy-4-methylpentanoate (2-isopropylmalate). This chain is 2-isopropylmalate synthase, found in Pyrococcus furiosus (strain ATCC 43587 / DSM 3638 / JCM 8422 / Vc1).